A 408-amino-acid polypeptide reads, in one-letter code: MSWDQVWIDVNLATMDPSISAPYGAITNAAIAVKDGKIAWLGPRSELPAFDVLSIPVYRGKGGWITPGLIDAHTHLIFAGNRANEFELRLQGASYEEIARSGGGIISTVKACREADEAELFELGRQRLNALAKEGVTTVEIKSGYGLDTETELKILRVARELGKHHHVDVKTTFLGAHAIPPEYKDNSDGYVDLIINKMLPAVIAENLADAVDVFCENIAFNLEQTERVLSAAKAAGLEIKLHAEQLTNMGGSALAARLGAKSVDHIEYLDEAGVKALSESGTCAVLLPGAFYFLRETQKPPVDLLRQYGVPMVLASDFNPGSSPICSTLLMLNMGCTLFRLTPEEALTGLTLNAAKALGIEDNVGSLVVGKQADFCLWDIVTPAQLAYSYGVNPCKDVVKNGKLVHQ.

Positions 73 and 75 each coordinate Fe(3+). Residues His73 and His75 each contribute to the Zn(2+) site. Residues Arg82, Tyr145, and His178 each contribute to the 4-imidazolone-5-propanoate site. Tyr145 contributes to the N-formimidoyl-L-glutamate binding site. Position 243 (His243) interacts with Fe(3+). His243 contributes to the Zn(2+) binding site. Residue Gln246 participates in 4-imidazolone-5-propanoate binding. Asp318 is a binding site for Fe(3+). Residue Asp318 coordinates Zn(2+). N-formimidoyl-L-glutamate-binding residues include Asn320 and Gly322. A 4-imidazolone-5-propanoate-binding site is contributed by Ser323.

This sequence belongs to the metallo-dependent hydrolases superfamily. HutI family. Zn(2+) is required as a cofactor. Requires Fe(3+) as cofactor.

It localises to the cytoplasm. It carries out the reaction 4-imidazolone-5-propanoate + H2O = N-formimidoyl-L-glutamate. It functions in the pathway amino-acid degradation; L-histidine degradation into L-glutamate; N-formimidoyl-L-glutamate from L-histidine: step 3/3. In terms of biological role, catalyzes the hydrolytic cleavage of the carbon-nitrogen bond in imidazolone-5-propanoate to yield N-formimidoyl-L-glutamate. It is the third step in the universal histidine degradation pathway. This is Imidazolonepropionase from Shewanella baltica (strain OS155 / ATCC BAA-1091).